The chain runs to 230 residues: MKKTTVLQVCMVFVVCSLQAVIGSPVDCPDQDTAGVSCIISLEKLLERAVQHAELIHHIAEESKLLFDEMLISFGVVNLHISEGTMCSPKTVSVPMSKTEIQQISDKWLLHSVLILVQFWINPLVDVQASLMNYQNAPSALVDRSKLMSTKITSLEQGILVLIRQILGEGGLVVEGPEDTSDHFVSSDTFETVRRDYSVIYCFRKDAHKIQTLLKLLKCRQIDKENCSLF.

A signal peptide spans 1 to 23 (MKKTTVLQVCMVFVVCSLQAVIG). 3 disulfides stabilise this stretch: C28/C38, C87/C202, and C219/C227. A glycan (N-linked (GlcNAc...) asparagine) is linked at N226.

It belongs to the somatotropin/prolactin family.

The protein localises to the secreted. The sequence is that of Somatolactin from Carassius auratus (Goldfish).